Here is a 185-residue protein sequence, read N- to C-terminus: Inner membrane-spanning protein YciB (185 aa).

The next 5 helical transmembrane spans lie at 19 to 39, 53 to 73, 76 to 96, 118 to 138, and 149 to 169; these read LGGV…QIVI, IMAS…EIRY, WKVT…QFQF, TLNF…IYIS, and FKSF…GVYI.

It belongs to the YciB family.

It is found in the cell inner membrane. Functionally, plays a role in cell envelope biogenesis, maintenance of cell envelope integrity and membrane homeostasis. The protein is Inner membrane-spanning protein YciB of Haemophilus influenzae (strain PittEE).